We begin with the raw amino-acid sequence, 449 residues long: UDP-N-acetylmuramoylalanine--D-glutamate ligase (449 aa).

Residue 118–124 (GSNGKTT) coordinates ATP.

It belongs to the MurCDEF family.

The protein localises to the cytoplasm. The catalysed reaction is UDP-N-acetyl-alpha-D-muramoyl-L-alanine + D-glutamate + ATP = UDP-N-acetyl-alpha-D-muramoyl-L-alanyl-D-glutamate + ADP + phosphate + H(+). The protein operates within cell wall biogenesis; peptidoglycan biosynthesis. Functionally, cell wall formation. Catalyzes the addition of glutamate to the nucleotide precursor UDP-N-acetylmuramoyl-L-alanine (UMA). The protein is UDP-N-acetylmuramoylalanine--D-glutamate ligase of Leuconostoc citreum (strain KM20).